Consider the following 241-residue polypeptide: Tetraspanin-1 (241 aa).

At 1-11 the chain is on the cytoplasmic side; sequence MGCFNFIKVMM. A helical membrane pass occupies residues 12 to 32; sequence ILFNMLIFLCGAALLAVGIWV. The Extracellular portion of the chain corresponds to 33–52; that stretch reads SVDGPSFVKIFGPMSSSAMQ. A helical transmembrane segment spans residues 53–73; that stretch reads FVNVGYFLIAAGAVLFALGFL. Topologically, residues 74 to 88 are cytoplasmic; it reads GCYGAQTESKCALMT. A helical membrane pass occupies residues 89-109; it reads FFFILLLIFIAEVAAAVVALV. At 110-211 the chain is on the extracellular side; the sequence is YTTLAENFLT…KQLLYDIRTN (102 aa). N-linked (GlcNAc...) asparagine glycosylation is found at Asn-141, Asn-154, Asn-167, Asn-180, Asn-189, and Asn-194. The helical transmembrane segment at 212-232 threads the bilayer; that stretch reads AVTVGGVAAGIGGLELAAMIV. The Cytoplasmic segment spans residues 233–241; sequence SMYLYCNLE.

The protein belongs to the tetraspanin (TM4SF) family. As to quaternary structure, interacts with SLC19A2. Interacts with NTRK1/TRKA.

The protein localises to the lysosome membrane. Its function is as follows. Structural component of specialized membrane microdomains known as tetraspanin-enriched microdomains (TERMs), which act as platforms for receptor clustering and signaling. Participates thereby in diverse biological functions such as cell signal transduction, adhesion, migration and protein trafficking. Regulates neuronal differentiation in response to NGF by facilitating NGF-mediated activation of NTRK1/TRKA receptor tyrosine kinase and subsequent downstream signaling pathways. Plays a role in the inhibition of TNFalpha-induced apoptosis. Mechanistically, inhibits the NF-kappa-B signaling pathway by blocking phosphorylation of CHUK. Also promotes the stability of the thiamine transporter 1/SLC19A2 in intestinal epithelial cells leading to an increase of thiamine uptake process. The chain is Tetraspanin-1 (TSPAN1) from Bos taurus (Bovine).